Reading from the N-terminus, the 726-residue chain is L-lysine 6-oxidase (726 aa).

The 4'-cysteinyl-tryptophylquinone (Cys-Trp) cross-link spans 516-581 (CTIQTVNFSE…LPPAYYSYWW (66 aa)). Trp581 is modified (tryptophylquinone).

In terms of assembly, homotetramer. Requires cysteine tryptophylquinone residue as cofactor. The cysteine tryptophylquinone (CTQ) is generated by oxidation of the indole ring of a tryptophan residue to form tryptophylquinone, followed by covalent cross-linking with a cysteine residue.

The protein localises to the secreted. The enzyme catalyses L-lysine + O2 + H2O = (S)-2-amino-6-oxohexanoate + H2O2 + NH4(+). Its activity is regulated as follows. Inhibited by aminoguanidine, amiloride and beta-aminopropionitrile. Functionally, has antibacterial activity against a wide spectrum of Gram-positive and Gram-negative bacteria including nosocomial isolates of S.aureus and Pseudomonas sp. The antimicrobial activity is due to hydrogen peroxide generated by its lysine oxidase activity. Also has autotoxic activity. Involved in biofilm differentiation; responsible for cell death within microcolonies during biofilm development which is linked to the generation of a phenotypically diverse dispersal population and thus may play a role in colonization. This Marinomonas mediterranea (strain ATCC 700492 / JCM 21426 / NBRC 103028 / MMB-1) protein is L-lysine 6-oxidase (lodA).